A 700-amino-acid chain; its full sequence is Myb-related protein B (700 aa).

HTH myb-type domains follow at residues 26–77, 78–133, and 134–184; these read RDSK…LRVL, NPDL…NPEV, and KKSC…KRKV. A DNA-binding region (H-T-H motif) is located at residues 54–77; it reads WKFLASHFPNRTDQQCQYRWLRVL. Lysine 104 is covalently cross-linked (Glycyl lysine isopeptide (Lys-Gly) (interchain with G-Cter in SUMO2)). DNA-binding regions (H-T-H motif) lie at residues 106–129 and 157–180; these read WTLI…HNHL and WAEI…NSTI. Glycyl lysine isopeptide (Lys-Gly) (interchain with G-Cter in SUMO2) cross-links involve residues lysine 194 and lysine 197. Disordered regions lie at residues 212-287 and 391-412; these read LQSA…PETS and PISP…VLKR. The span at 213-229 shows a compositional bias: polar residues; it reads QSAQPTEGQGSLLTNWP. The residue at position 241 (serine 241) is a Phosphoserine. Threonine 266 carries the phosphothreonine modification. Residue lysine 275 forms a Glycyl lysine isopeptide (Lys-Gly) (interchain with G-Cter in SUMO2) linkage. Phosphoserine is present on residues serine 282 and serine 393. Lysine 411 participates in a covalent cross-link: Glycyl lysine isopeptide (Lys-Gly) (interchain with G-Cter in SUMO2). Residues 411–417 carry the Nuclear localization signal motif; that stretch reads KRQRKRR. Phosphothreonine; by CDK2 is present on residues threonine 440 and threonine 444. Glycyl lysine isopeptide (Lys-Gly) (interchain with G-Cter in SUMO2) cross-links involve residues lysine 447 and lysine 482. Residues threonine 487 and threonine 494 each carry the phosphothreonine; by CDK2 modification. Residue lysine 499 forms a Glycyl lysine isopeptide (Lys-Gly) (interchain with G-Cter in SUMO2) linkage. Residue threonine 505 is modified to Phosphothreonine. Lysine 509 participates in a covalent cross-link: Glycyl lysine isopeptide (Lys-Gly) (interchain with G-Cter in SUMO2). A Phosphothreonine; by CDK2 modification is found at threonine 520. Glycyl lysine isopeptide (Lys-Gly) (interchain with G-Cter in SUMO2) cross-links involve residues lysine 523, lysine 533, and lysine 546. The short motif at 564 to 584 is the Bipartite nuclear localization signal element; it reads RPEKQKRKPGLRRSPIKKVRK. Position 577 is a phosphoserine; by CDK2 (serine 577). Glycyl lysine isopeptide (Lys-Gly) (interchain with G-Cter in SUMO2) cross-links involve residues lysine 584, lysine 596, lysine 625, lysine 639, and lysine 648.

As to quaternary structure, component of the DREAM complex (also named LINC complex) at least composed of E2F4, E2F5, LIN9, LIN37, LIN52, LIN54, MYBL1, MYBL2, RBL1, RBL2, RBBP4, TFDP1 and TFDP2. The complex exists in quiescent cells where it represses cell cycle-dependent genes. It dissociates in S phase when LIN9, LIN37, LIN52 and LIN54 form a subcomplex that binds to MYBL22. Interacts with CCNF (via the Cyclin N-terminal domain). In terms of processing, phosphorylated by cyclin A/CDK2 during S-phase. Phosphorylation at Thr-520 is probably involved in transcriptional activity.

It localises to the nucleus. Its function is as follows. Transcription factor involved in the regulation of cell survival, proliferation, and differentiation. Transactivates the expression of the CLU gene. The polypeptide is Myb-related protein B (MYBL2) (Homo sapiens (Human)).